Reading from the N-terminus, the 88-residue chain is MPKKPARTRRPAPLAGRARKKNLLDSLGLRTVDYKDTATLRVFISERGKIRSRQVTGLSVQQQRQVATAIKNAREMALLPYPGQGIKP.

The protein belongs to the bacterial ribosomal protein bS18 family. As to quaternary structure, part of the 30S ribosomal subunit. Forms a tight heterodimer with protein bS6.

Functionally, binds as a heterodimer with protein bS6 to the central domain of the 16S rRNA, where it helps stabilize the platform of the 30S subunit. The polypeptide is Small ribosomal subunit protein bS18B (Mycolicibacterium paratuberculosis (strain ATCC BAA-968 / K-10) (Mycobacterium paratuberculosis)).